Here is a 449-residue protein sequence, read N- to C-terminus: Lysine-sensitive aspartokinase 3 (449 aa).

Positions 2–245 (SEIVVSKFGG…AAKRIDEIAF (244 aa)) are aspartokinase. 8 to 11 (KFGG) provides a ligand contact to ATP. Substrate is bound by residues threonine 45, glutamate 119, and 198–201 (RGGS). Residues 221-222 (TD), tyrosine 227, arginine 232, and 257-258 (KV) contribute to the ATP site. The interface stretch occupies residues 246–449 (AEAAEMATFG…VQKLHSNLFE (204 aa)). The interval 299 to 449 (FRALALRRNQ…VQKLHSNLFE (151 aa)) is required for homodimerization. The 82-residue stretch at 313–394 (LHSLNMLHSR…GLALVALIGN (82 aa)) folds into the ACT domain. Residues methionine 318, serine 321, 324 to 325 (FL), 338 to 340 (SVD), and 345 to 346 (SE) contribute to the L-lysine site.

It belongs to the aspartokinase family. In terms of assembly, homodimer. In the inactive form a homotetramer is formed.

It carries out the reaction L-aspartate + ATP = 4-phospho-L-aspartate + ADP. The protein operates within amino-acid biosynthesis; L-lysine biosynthesis via DAP pathway; (S)-tetrahydrodipicolinate from L-aspartate: step 1/4. With respect to regulation, synthesis and activity are sensitive to the allosteric inhibitor lysine, one of the end metabolites of the aspartic acid family branched pathway. The protein is Lysine-sensitive aspartokinase 3 (lysC) of Escherichia coli (strain K12).